The following is a 152-amino-acid chain: Xanthine-guanine phosphoribosyltransferase (152 aa).

Residues arginine 37–glycine 38, arginine 69, and aspartate 88–threonine 96 contribute to the 5-phospho-alpha-D-ribose 1-diphosphate site. Position 69 (arginine 69) interacts with GMP. Aspartate 89 contacts Mg(2+). Guanine-binding residues include aspartate 92 and isoleucine 135. The xanthine site is built by aspartate 92 and isoleucine 135. GMP contacts are provided by residues aspartate 92–threonine 96 and tryptophan 134–isoleucine 135.

The protein belongs to the purine/pyrimidine phosphoribosyltransferase family. XGPT subfamily. As to quaternary structure, homotetramer. Mg(2+) serves as cofactor.

It is found in the cell inner membrane. The catalysed reaction is GMP + diphosphate = guanine + 5-phospho-alpha-D-ribose 1-diphosphate. The enzyme catalyses XMP + diphosphate = xanthine + 5-phospho-alpha-D-ribose 1-diphosphate. It catalyses the reaction IMP + diphosphate = hypoxanthine + 5-phospho-alpha-D-ribose 1-diphosphate. It functions in the pathway purine metabolism; GMP biosynthesis via salvage pathway; GMP from guanine: step 1/1. The protein operates within purine metabolism; XMP biosynthesis via salvage pathway; XMP from xanthine: step 1/1. In terms of biological role, purine salvage pathway enzyme that catalyzes the transfer of the ribosyl-5-phosphate group from 5-phospho-alpha-D-ribose 1-diphosphate (PRPP) to the N9 position of the 6-oxopurines guanine and xanthine to form the corresponding ribonucleotides GMP (guanosine 5'-monophosphate) and XMP (xanthosine 5'-monophosphate), with the release of PPi. To a lesser extent, also acts on hypoxanthine. The chain is Xanthine-guanine phosphoribosyltransferase from Escherichia coli O127:H6 (strain E2348/69 / EPEC).